The primary structure comprises 96 residues: Co-chaperonin GroES (96 aa).

Belongs to the GroES chaperonin family. In terms of assembly, heptamer of 7 subunits arranged in a ring. Interacts with the chaperonin GroEL.

The protein localises to the cytoplasm. Its function is as follows. Together with the chaperonin GroEL, plays an essential role in assisting protein folding. The GroEL-GroES system forms a nano-cage that allows encapsulation of the non-native substrate proteins and provides a physical environment optimized to promote and accelerate protein folding. GroES binds to the apical surface of the GroEL ring, thereby capping the opening of the GroEL channel. The polypeptide is Co-chaperonin GroES (Haemophilus influenzae (strain PittGG)).